Here is a 148-residue protein sequence, read N- to C-terminus: Protein-export protein SecB (148 aa).

Belongs to the SecB family. As to quaternary structure, homotetramer, a dimer of dimers. One homotetramer interacts with 1 SecA dimer.

It is found in the cytoplasm. One of the proteins required for the normal export of preproteins out of the cell cytoplasm. It is a molecular chaperone that binds to a subset of precursor proteins, maintaining them in a translocation-competent state. It also specifically binds to its receptor SecA. This is Protein-export protein SecB from Psychrobacter arcticus (strain DSM 17307 / VKM B-2377 / 273-4).